Here is a 255-residue protein sequence, read N- to C-terminus: Small ribosomal subunit protein eS4 (255 aa).

In terms of domain architecture, S4 RNA-binding spans 43–115; that stretch reads IPLLILVRDV…PTRFFTLHPI (73 aa).

This sequence belongs to the eukaryotic ribosomal protein eS4 family.

The chain is Small ribosomal subunit protein eS4 from Hyperthermus butylicus (strain DSM 5456 / JCM 9403 / PLM1-5).